The chain runs to 155 residues: SsrA-binding protein (155 aa).

The protein belongs to the SmpB family.

The protein localises to the cytoplasm. Required for rescue of stalled ribosomes mediated by trans-translation. Binds to transfer-messenger RNA (tmRNA), required for stable association of tmRNA with ribosomes. tmRNA and SmpB together mimic tRNA shape, replacing the anticodon stem-loop with SmpB. tmRNA is encoded by the ssrA gene; the 2 termini fold to resemble tRNA(Ala) and it encodes a 'tag peptide', a short internal open reading frame. During trans-translation Ala-aminoacylated tmRNA acts like a tRNA, entering the A-site of stalled ribosomes, displacing the stalled mRNA. The ribosome then switches to translate the ORF on the tmRNA; the nascent peptide is terminated with the 'tag peptide' encoded by the tmRNA and targeted for degradation. The ribosome is freed to recommence translation, which seems to be the essential function of trans-translation. This is SsrA-binding protein from Streptococcus pyogenes serotype M4 (strain MGAS10750).